The chain runs to 500 residues: L-arabinose isomerase (500 aa).

Residues E306, E333, H350, and H450 each coordinate Mn(2+).

This sequence belongs to the arabinose isomerase family. As to quaternary structure, homohexamer. Mn(2+) serves as cofactor.

The catalysed reaction is beta-L-arabinopyranose = L-ribulose. It participates in carbohydrate degradation; L-arabinose degradation via L-ribulose; D-xylulose 5-phosphate from L-arabinose (bacterial route): step 1/3. In terms of biological role, catalyzes the conversion of L-arabinose to L-ribulose. This is L-arabinose isomerase from Salmonella choleraesuis (strain SC-B67).